The chain runs to 70 residues: Palustrin-2ISa (70 aa).

The first 22 residues, 1–22 (MFTLKKSLLLLFFLGTISLSLC), serve as a signal peptide directing secretion. Positions 23–39 (EQERSAEDEGEVIEEEV) are cleaved as a propeptide — removed in mature form. An intrachain disulfide couples Cys-64 to Cys-70.

As to expression, expressed by the skin glands.

The protein resides in the secreted. In terms of biological role, has antimicrobial activity against Gram-negative bacterium E.coli ATCC 8739 (MIC=100 ug), against Gram positive bacteria S.aureus ATCC 6538 (MIC=25 ug), methicillin-resistant S.aureus ATCC 43300 (MIC=100 ug), B.subtilis ATCC 6633 (MIC=12.5 ug) and against fungus C.albicans ATCC 90028 (MIC=100 ug). This is Palustrin-2ISa from Odorrana ishikawae (Ishikawa's frog).